Here is a 388-residue protein sequence, read N- to C-terminus: Staphopain A (388 aa).

Residues 1–25 (MKRNFPKLIALSLILSLSVTPIANA) form the signal peptide. The propeptide occupies 26-214 (ESNSNIKAKD…TSQFKSNNYT (189 aa)). Residues Cys-238, His-334, and Asn-355 contribute to the active site.

It belongs to the peptidase C47 family. In the cytoplasm, prematurely activated/folded ScpA forms a stable non-covalent complex with ScpB. Post-translationally, cleavage leads to the activation of ScpA probably by an auto-catalytic manner.

Its subcellular location is the secreted. The enzyme catalyses Broad endopeptidase action on proteins including elastin, but rather limited hydrolysis of small-molecule substrates. Assays are conveniently made with hemoglobin, casein or Z-Phe-Arg-NHMec as substrate.. With respect to regulation, prematurely activated/folded staphopain A is inhibited by staphostatin A (ScpB), which is probably required to protect staphylococcal cytoplasmic proteins from degradation by ScpA. In terms of biological role, cysteine protease that plays an important role in the inhibition of host innate immune response. Cleaves host elastins found in connective tissues, pulmonary surfactant protein A in the lungs, and the chemokine receptor CXCR2 on leukocytes. Proteolytic cleavage of surfactant protein A impairs bacterial phagocytosis by neutrophils while CXCR2 degradation blocks neutrophil activation and chemotaxis. Additionally, promotes vascular leakage by activating the plasma kallikerin/kinin system, resulting in hypotension. In Staphylococcus aureus (strain MSSA476), this protein is Staphopain A (sspP).